Consider the following 158-residue polypeptide: 18.2 kDa class I heat shock protein (158 aa).

Positions 44 to 158 constitute a sHSP domain; it reads ENSAFVSTRV…PEVKTIDISG (115 aa).

Belongs to the small heat shock protein (HSP20) family. As to quaternary structure, forms oligomeric structures.

It localises to the cytoplasm. The polypeptide is 18.2 kDa class I heat shock protein (HSP18.2) (Medicago sativa (Alfalfa)).